We begin with the raw amino-acid sequence, 385 residues long: Lysine 6-dehydrogenase (385 aa).

This sequence belongs to the saccharopine dehydrogenase family. As to quaternary structure, homohexamer.

The catalysed reaction is L-lysine + NAD(+) = L-1-piperideine-6-carboxylate + NH4(+) + NADH + 2 H(+). Its function is as follows. Catalyzes the oxidative deamination of L-lysine in the presence of NAD. Can also use (S)-(2-aminoethyl)-L-cysteine as a substrate, but more slowly. Can use both NAD and NADP but the preferred substrate is NAD. The polypeptide is Lysine 6-dehydrogenase (lysDH) (Geobacillus stearothermophilus (Bacillus stearothermophilus)).